We begin with the raw amino-acid sequence, 415 residues long: F-box protein ETP1 (415 aa).

The F-box domain occupies 1 to 46 (MTIPDLCNDLVDEILCRVPARNLKRLRSTSKRWNRLFKDDRRFARE).

In terms of assembly, interacts with EIN2 (via C-terminus).

Functionally, negative regulator of EIN2 protein stability. The polypeptide is F-box protein ETP1 (Arabidopsis thaliana (Mouse-ear cress)).